A 38-amino-acid chain; its full sequence is Beta-defensin 1 (38 aa).

3 disulfide bridges follow: C5/C34, C12/C27, and C17/C35.

The protein belongs to the beta-defensin family. As to quaternary structure, monomer. Homodimer. As to expression, neutrophilic granules.

It is found in the secreted. Its subcellular location is the membrane. Functionally, has bactericidal activity. Active against E.coli ML35 but not against S.aureus 502A. May act as a ligand for C-C chemokine receptor CCR6. Positively regulates the sperm motility and bactericidal activity in a CCR6-dependent manner. Binds to CCR6 and triggers Ca2+ mobilization in the sperm which is important for its motility. This is Beta-defensin 1 (DEFB1) from Bos taurus (Bovine).